A 516-amino-acid polypeptide reads, in one-letter code: Probable serine/threonine-protein kinase DDB_G0293276 (516 aa).

The segment at 69–115 (SIEIDDENPYNTNNNNNSNNNNNNNNNNCNNSNNSNNNKNINSLDNI) is disordered. Over residues 79 to 115 (NTNNNNNSNNNNNNNNNNCNNSNNSNNNKNINSLDNI) the composition is skewed to low complexity. Positions 232–479 (YKHVECIGKG…SKDIKNHPYF (248 aa)) constitute a Protein kinase domain. ATP-binding positions include 238–246 (IGKGGYGVV) and Lys261. The active-site Proton acceptor is the Asp350.

The protein belongs to the protein kinase superfamily. AGC Ser/Thr protein kinase family.

The catalysed reaction is L-seryl-[protein] + ATP = O-phospho-L-seryl-[protein] + ADP + H(+). It catalyses the reaction L-threonyl-[protein] + ATP = O-phospho-L-threonyl-[protein] + ADP + H(+). This chain is Probable serine/threonine-protein kinase DDB_G0293276, found in Dictyostelium discoideum (Social amoeba).